Here is a 732-residue protein sequence, read N- to C-terminus: Polyribonucleotide nucleotidyltransferase (732 aa).

Mg(2+) contacts are provided by aspartate 503 and aspartate 509. The 60-residue stretch at 570-629 (PRLTAIQVPVESIGLIIGKGGETIRSITEETGAEINIEDDGTVTIACSSNEGTKGAVEII) folds into the KH domain. Positions 639-713 (GTVYIGKVRD…GKTRFALSIK (75 aa)) constitute an S1 motif domain.

It belongs to the polyribonucleotide nucleotidyltransferase family. Mg(2+) is required as a cofactor.

The protein localises to the cytoplasm. It catalyses the reaction RNA(n+1) + phosphate = RNA(n) + a ribonucleoside 5'-diphosphate. In terms of biological role, involved in mRNA degradation. Catalyzes the phosphorolysis of single-stranded polyribonucleotides processively in the 3'- to 5'-direction. The polypeptide is Polyribonucleotide nucleotidyltransferase (Chlorobium phaeovibrioides (strain DSM 265 / 1930) (Prosthecochloris vibrioformis (strain DSM 265))).